The following is a 134-amino-acid chain: ATP synthase epsilon chain (134 aa).

It belongs to the ATPase epsilon chain family. In terms of assembly, F-type ATPases have 2 components, CF(1) - the catalytic core - and CF(0) - the membrane proton channel. CF(1) has five subunits: alpha(3), beta(3), gamma(1), delta(1), epsilon(1). CF(0) has three main subunits: a, b and c.

It is found in the cell membrane. In terms of biological role, produces ATP from ADP in the presence of a proton gradient across the membrane. This is ATP synthase epsilon chain from Listeria monocytogenes serotype 4a (strain HCC23).